The sequence spans 369 residues: Queuine tRNA-ribosyltransferase (369 aa).

Asp-89 acts as the Proton acceptor in catalysis. Substrate is bound by residues 89-93, Asp-143, Gln-187, and Gly-214; that span reads DSGGF. Positions 245–251 are RNA binding; it reads GVGTPED. Catalysis depends on Asp-264, which acts as the Nucleophile. The tract at residues 269 to 273 is RNA binding; important for wobble base 34 recognition; sequence TRNAR. Cys-302, Cys-304, Cys-307, and His-333 together coordinate Zn(2+).

Belongs to the queuine tRNA-ribosyltransferase family. As to quaternary structure, homodimer. Within each dimer, one monomer is responsible for RNA recognition and catalysis, while the other monomer binds to the replacement base PreQ1. Zn(2+) serves as cofactor.

The catalysed reaction is 7-aminomethyl-7-carbaguanine + guanosine(34) in tRNA = 7-aminomethyl-7-carbaguanosine(34) in tRNA + guanine. It functions in the pathway tRNA modification; tRNA-queuosine biosynthesis. Its function is as follows. Catalyzes the base-exchange of a guanine (G) residue with the queuine precursor 7-aminomethyl-7-deazaguanine (PreQ1) at position 34 (anticodon wobble position) in tRNAs with GU(N) anticodons (tRNA-Asp, -Asn, -His and -Tyr). Catalysis occurs through a double-displacement mechanism. The nucleophile active site attacks the C1' of nucleotide 34 to detach the guanine base from the RNA, forming a covalent enzyme-RNA intermediate. The proton acceptor active site deprotonates the incoming PreQ1, allowing a nucleophilic attack on the C1' of the ribose to form the product. After dissociation, two additional enzymatic reactions on the tRNA convert PreQ1 to queuine (Q), resulting in the hypermodified nucleoside queuosine (7-(((4,5-cis-dihydroxy-2-cyclopenten-1-yl)amino)methyl)-7-deazaguanosine). The protein is Queuine tRNA-ribosyltransferase of Dechloromonas aromatica (strain RCB).